Reading from the N-terminus, the 1168-residue chain is MFLVYLRNCMDFFFNSSFNYSLTSIDFYKTIFLIFANKIKNNFLYIISFQWFFNITYIINQLPSIDDELYIPIVRDFFNFNSLITYIYNISLTQIFSIFSFSAIHVYFIKRLYSENLTSILPALSGYFISEILFIICIYSGITNLFIILANWERFFIISGIIFFFYEGVNFIKENKNKNIYLKIPFIKHSTFFNSYRFFNFKEFFLGVFLFCLDSPSIFTLVSNLSLTPTVSNFEFFINSSFIQLVLFILIRSFFFYLSFIIIYPFILNKIHHNTYFQSDTLKKINIFIQKGFGMLLIFFSVSSIPFYTIEYFLGYLLGIIPKDISLFFTQLDPYFLSDSPGFYEQFYYGNTVVPFKAAKFDRGRYLLYPAYRELPPSYEDFIFKPIYLEWTKTLKSNNYIDRYLGSQKTTMQYIQTKATPIIKFFENLFPDANVRKSNKRKKILTQLLTDKFLGSHTKLNTYFNVPYAEKLLFFNRLSKSAFRINNKQYYNDLILSSIEEFVTFNENLIPNFETLTPFDKCTYRFSLSKNLLTSRLKPFVDFLDLFSAPEFDITPIYVKMAENILSTYDRKKFFAPLANFFKDETLNESKVKKKNAQPSLSREIEAIQGKIPLESILTEGIVALFPEWAYIKMELVGKLGSIIKEYQRYFNFLEIFNLYLRGHSFKLTVKQSIDLHYRQLYQTEAISYLRHYFNNNSYRKIRDDLDNFSKVLKINFIENTKNKTNKIKNLNTREDSKKLLISLEKDSKKFMKYLLFKTTRSFASKVYNHQFKGTLIDLIQWFSYSPYTSSMFKEINTKEMENVFIEAEEPSYLLSLNNDVKKYYPIIKYDQAFYKKDALDKGIIFDHILYKSLIEELYDDDLTLENSESLKNENKLSKKNLSLINSNIISPNQNIFDLLNMIIDYITITNYSLSKIDTLLNPFIEYMSFEPLCASNHNNLFVLSTAHYSINDIDLPVKNHNTNKWPLPSNILDYLVYNISDDKVSFKNPLAYIGMFLQIPYEKFGIDYKNTYIFKVDNYEELNEHEVFDQYMDFFARYEDPAYESLQLKFINLFLENSLDDTNKALCKNYLFSKNFMVPTAYIDCPFPILQHFYLAKNLRQLFFVRSPIRGGYKWAGSYTNNIINNKLYTDLLKIYNRIILLWHKIYTSIIYKFKRNNHGTLAQLVE.

7 helical membrane passes run 43 to 63 (FLYI…NQLP), 89 to 109 (NISL…VYFI), 132 to 152 (ILFI…LANW), 155 to 175 (FFII…IKEN), 203 to 223 (EFFL…TLVS), 247 to 267 (LFIL…YPFI), and 293 to 313 (FGML…IEYF).

The protein belongs to the ycf78 family.

The protein resides in the plastid membrane. This is an uncharacterized protein from Helicosporidium sp. subsp. Simulium jonesii (Green alga).